A 290-amino-acid chain; its full sequence is 4-hydroxy-tetrahydrodipicolinate synthase (290 aa).

Threonine 44 contacts pyruvate. The active-site Proton donor/acceptor is the tyrosine 132. Residue lysine 160 is the Schiff-base intermediate with substrate of the active site. Isoleucine 202 is a pyruvate binding site.

It belongs to the DapA family. In terms of assembly, homotetramer; dimer of dimers.

The protein localises to the cytoplasm. The enzyme catalyses L-aspartate 4-semialdehyde + pyruvate = (2S,4S)-4-hydroxy-2,3,4,5-tetrahydrodipicolinate + H2O + H(+). The protein operates within amino-acid biosynthesis; L-lysine biosynthesis via DAP pathway; (S)-tetrahydrodipicolinate from L-aspartate: step 3/4. In terms of biological role, catalyzes the condensation of (S)-aspartate-beta-semialdehyde [(S)-ASA] and pyruvate to 4-hydroxy-tetrahydrodipicolinate (HTPA). The protein is 4-hydroxy-tetrahydrodipicolinate synthase of Legionella pneumophila subsp. pneumophila (strain Philadelphia 1 / ATCC 33152 / DSM 7513).